The following is a 2392-amino-acid chain: Protein Ycf2 (2392 aa).

Residue 1658 to 1665 (GPTEIGKS) participates in ATP binding.

It belongs to the Ycf2 family.

It is found in the plastid. It localises to the chloroplast stroma. Functionally, probable ATPase of unknown function. Its presence in a non-photosynthetic plant (Epifagus virginiana) and experiments in tobacco indicate that it has an essential function which is probably not related to photosynthesis. This Anthoceros angustus (Hornwort) protein is Protein Ycf2.